Consider the following 297-residue polypeptide: Phosphatidylglycerol--prolipoprotein diacylglyceryl transferase (297 aa).

Helical transmembrane passes span phenylalanine 20–valine 40, glutamate 57–phenylalanine 77, alanine 105–isoleucine 125, and isoleucine 133–glycine 153. Arginine 154 contacts a 1,2-diacyl-sn-glycero-3-phospho-(1'-sn-glycerol). 3 consecutive transmembrane segments (helical) span residues proline 193–phenylalanine 213, glycine 225–leucine 245, and alanine 266–leucine 286.

It belongs to the Lgt family.

It is found in the cell inner membrane. It carries out the reaction L-cysteinyl-[prolipoprotein] + a 1,2-diacyl-sn-glycero-3-phospho-(1'-sn-glycerol) = an S-1,2-diacyl-sn-glyceryl-L-cysteinyl-[prolipoprotein] + sn-glycerol 1-phosphate + H(+). It participates in protein modification; lipoprotein biosynthesis (diacylglyceryl transfer). Catalyzes the transfer of the diacylglyceryl group from phosphatidylglycerol to the sulfhydryl group of the N-terminal cysteine of a prolipoprotein, the first step in the formation of mature lipoproteins. This Prochlorococcus marinus (strain MIT 9215) protein is Phosphatidylglycerol--prolipoprotein diacylglyceryl transferase.